Here is a 514-residue protein sequence, read N- to C-terminus: Probable lipid II flippase MurJ (514 aa).

Helical transmembrane passes span 3–23, 25–45, 92–112, 130–150, 157–177, 186–206, 245–265, 271–291, 315–335, 354–374, 386–406, 409–429, 448–468, and 481–501; these read ILKS…FGFF, DVLI…FIAF, ILVL…IIFI, LLKI…CSSI, FFIP…FSFF, IISL…YQFP, ISLI…ISWI, LIEF…FTSF, LILS…LVII, LELY…VSAF, ISIL…FYFQ, GLAL…YWKL, LLIA…FIPS, and LFTI…FLGI.

It belongs to the MurJ/MviN family.

It is found in the cell inner membrane. It participates in cell wall biogenesis; peptidoglycan biosynthesis. Involved in peptidoglycan biosynthesis. Transports lipid-linked peptidoglycan precursors from the inner to the outer leaflet of the cytoplasmic membrane. In Buchnera aphidicola subsp. Schizaphis graminum (strain Sg), this protein is Probable lipid II flippase MurJ.